The following is a 2890-amino-acid chain: Bifunctional DNA-directed RNA polymerase subunit beta-beta' (2890 aa).

A DNA-directed RNA polymerase subunit beta region spans residues 1-1377; the sequence is MSKKIPLKNR…DINIFGDDVD (1377 aa). The tract at residues 1384–2890 is DNA-directed RNA polymerase subunit beta'; sequence PIVIKEDDRP…LRTLEDDPKF (1507 aa). Residues C1449, C1451, C1465, and C1468 each contribute to the Zn(2+) site. Positions 1849, 1851, and 1853 each coordinate Mg(2+). Zn(2+)-binding residues include C2179, C2253, C2260, and C2263.

It in the N-terminal section; belongs to the RNA polymerase beta chain family. The protein in the C-terminal section; belongs to the RNA polymerase beta' chain family. As to quaternary structure, the RNAP catalytic core consists of 2 alpha, 1 beta/beta' and 1 omega subunit. When a sigma factor is associated with the core the holoenzyme is formed, which can initiate transcription. It depends on Mg(2+) as a cofactor. Requires Zn(2+) as cofactor.

It carries out the reaction RNA(n) + a ribonucleoside 5'-triphosphate = RNA(n+1) + diphosphate. Functionally, DNA-dependent RNA polymerase catalyzes the transcription of DNA into RNA using the four ribonucleoside triphosphates as substrates. This Helicobacter pylori (strain Shi470) protein is Bifunctional DNA-directed RNA polymerase subunit beta-beta' (rpoBC).